Here is a 276-residue protein sequence, read N- to C-terminus: Diaminopimelate epimerase (276 aa).

Positions 13, 46, and 66 each coordinate substrate. Residue cysteine 75 is the Proton donor of the active site. Substrate is bound by residues glycine 76–asparagine 77, asparagine 159, asparagine 192, and glutamate 210–arginine 211. The Proton acceptor role is filled by cysteine 219. Glycine 220 to threonine 221 is a binding site for substrate.

The protein belongs to the diaminopimelate epimerase family. Homodimer.

The protein resides in the cytoplasm. It catalyses the reaction (2S,6S)-2,6-diaminopimelate = meso-2,6-diaminopimelate. The protein operates within amino-acid biosynthesis; L-lysine biosynthesis via DAP pathway; DL-2,6-diaminopimelate from LL-2,6-diaminopimelate: step 1/1. In terms of biological role, catalyzes the stereoinversion of LL-2,6-diaminopimelate (L,L-DAP) to meso-diaminopimelate (meso-DAP), a precursor of L-lysine and an essential component of the bacterial peptidoglycan. The chain is Diaminopimelate epimerase from Pseudomonas putida (strain GB-1).